The sequence spans 326 residues: MYGIEYTTILNSLILVVLLNYILKSVTRVMDYIIYRFLFVIVIVSLCAKAQNYGINLPITGSMDGAYTNTTDDKPFLTSTLCIYYPTIASNDLADPDWKNTVSQLFLTKGWPMGSVYFNEYVNIAEFSINPQLFCDYNIVLMKYESDLEMDMSELADLLLNEWLCNPMDVTLYYYQQTDEANKWISMGTSCTIKVCPLNTQTLGIGCLTTDTSSFETVAVNEKLVITDVVDGVSHKLDVTNVTCTIRNCKKLGPRENVAVVQIGGANILDITADPTTAPQTERMMRVNWKKWWQVFYTIVDYINQIVKVMSKRSRSLNSAAFYYRV.

The signal sequence occupies residues Met-1–Ala-50. Asn-69 carries an N-linked (GlcNAc...) asparagine; by host glycan. Disulfide bonds link Cys-82–Cys-135, Cys-165–Cys-249, Cys-191–Cys-244, and Cys-196–Cys-207. Asp-95 lines the Ca(2+) pocket. Residues Cys-165–Pro-167 form a CNP motif; interaction with ITGAV/ITGB3 region. Ca(2+) is bound by residues Gln-177, Gly-206, Ser-214, Glu-216, Asp-228, Val-229, and Asp-231. The tract at residues Leu-237–Val-239 is LVD motif; interaction with ITGA4/ITGB1 heterodimer. An N-linked (GlcNAc...) asparagine; by host glycan is attached at Asn-241. The tract at residues Gly-253–Arg-255 is GPR motif; interaction with ITGAX/ITGB2. Asp-301 contacts Ca(2+).

Belongs to the rotavirus VP7 family. In terms of assembly, homotrimer; disulfide-linked. 2 Ca(2+) ions bound at each subunit interface in the trimer hold the trimer together. Interacts with the intermediate capsid protein VP6. Interacts with the outer capsid protein VP5*. In terms of processing, N-glycosylated. Post-translationally, the N-terminus is blocked possibly by pyroglutamic acid.

The protein resides in the virion. It localises to the host endoplasmic reticulum lumen. Calcium-binding protein that interacts with rotavirus cell receptors once the initial attachment by VP4 has been achieved. Rotavirus attachment and entry into the host cell probably involves multiple sequential contacts between the outer capsid proteins VP4 and VP7, and the cell receptors. Following entry into the host cell, low intracellular or intravesicular Ca(2+) concentration probably causes the calcium-stabilized VP7 trimers to dissociate from the virion. This step is probably necessary for the membrane-disrupting entry step and the release of VP4, which is locked onto the virion by VP7. This Rotavirus A (isolate RVA/Cow/India/Hg18/2000/G15P[21]) (RV-A) protein is Outer capsid glycoprotein VP7.